A 576-amino-acid polypeptide reads, in one-letter code: Protein O-linked-mannose beta-1,4-N-acetylglucosaminyltransferase 2 (576 aa).

At 1 to 4 (MNIS) the chain is on the cytoplasmic side. The chain crosses the membrane as a helical; Signal-anchor for type II membrane protein span at residues 5 to 25 (AVFNALLVSIMAAVLWKHVKL). Residues 26–576 (LEQFYVIEEE…PFAEVLVCNT (551 aa)) lie on the Lumenal side of the membrane. N-linked (GlcNAc...) asparagine glycans are attached at residues Asn98, Asn275, Asn335, Asn451, Asn539, and Asn561. The Fibronectin type-III domain occupies 482 to 576 (RESKCQASAQ…PFAEVLVCNT (95 aa)).

It belongs to the glycosyltransferase 61 family.

Its subcellular location is the endoplasmic reticulum membrane. It catalyses the reaction 3-O-(alpha-D-mannosyl)-L-threonyl-[protein] + UDP-N-acetyl-alpha-D-glucosamine = 3-O-(N-acetyl-beta-D-glucosaminyl-(1-&gt;4)-alpha-D-mannosyl)-L-threonyl-[protein] + UDP + H(+). It functions in the pathway protein modification; protein glycosylation. In terms of biological role, O-linked mannose beta-1,4-N-acetylglucosaminyltransferase that transfers UDP-N-acetyl-D-glucosamine to the 4-position of the mannose to generate N-acetyl-D-glucosamine-beta-1,4-O-D-mannosylprotein. Involved in the biosynthesis of the phosphorylated O-mannosyl trisaccharide (N-acetylgalactosamine-beta-3-N-acetylglucosamine-beta-4-(phosphate-6-)mannose), a carbohydrate structure present in alpha-dystroglycan (DAG1), which is required for binding laminin G-like domain-containing extracellular proteins with high affinity. In Xenopus tropicalis (Western clawed frog), this protein is Protein O-linked-mannose beta-1,4-N-acetylglucosaminyltransferase 2 (pomgnt2).